Reading from the N-terminus, the 443-residue chain is ATP-dependent protease ATPase subunit HslU (443 aa).

ATP-binding positions include Ile-18, 60–65 (GVGKTE), Asp-256, Glu-321, and Arg-393.

The protein belongs to the ClpX chaperone family. HslU subfamily. A double ring-shaped homohexamer of HslV is capped on each side by a ring-shaped HslU homohexamer. The assembly of the HslU/HslV complex is dependent on binding of ATP.

The protein localises to the cytoplasm. In terms of biological role, ATPase subunit of a proteasome-like degradation complex; this subunit has chaperone activity. The binding of ATP and its subsequent hydrolysis by HslU are essential for unfolding of protein substrates subsequently hydrolyzed by HslV. HslU recognizes the N-terminal part of its protein substrates and unfolds these before they are guided to HslV for hydrolysis. The protein is ATP-dependent protease ATPase subunit HslU of Pasteurella multocida (strain Pm70).